A 427-amino-acid chain; its full sequence is Glutamyl-tRNA reductase (427 aa).

Residues 49-52 (TCNR), Ser109, 114-116 (EGQ), and Gln120 each bind substrate. Cys50 acts as the Nucleophile in catalysis. 188-193 (GAGKMA) serves as a coordination point for NADP(+).

Belongs to the glutamyl-tRNA reductase family. Homodimer.

It carries out the reaction (S)-4-amino-5-oxopentanoate + tRNA(Glu) + NADP(+) = L-glutamyl-tRNA(Glu) + NADPH + H(+). Its pathway is porphyrin-containing compound metabolism; protoporphyrin-IX biosynthesis; 5-aminolevulinate from L-glutamyl-tRNA(Glu): step 1/2. It functions in the pathway porphyrin-containing compound metabolism; chlorophyll biosynthesis. Feedback inhibition by heme. Its function is as follows. Catalyzes the NADPH-dependent reduction of glutamyl-tRNA(Glu) to glutamate 1-semialdehyde (GSA). The polypeptide is Glutamyl-tRNA reductase (Synechocystis sp. (strain ATCC 27184 / PCC 6803 / Kazusa)).